The chain runs to 252 residues: Triosephosphate isomerase (252 aa).

Residue Asn9–Lys11 coordinates substrate. His96 functions as the Electrophile in the catalytic mechanism. Residue Glu168 is the Proton acceptor of the active site. Substrate contacts are provided by residues Gly174, Ser214, and Gly235–Gly236.

It belongs to the triosephosphate isomerase family. In terms of assembly, homodimer.

The protein resides in the cytoplasm. It carries out the reaction D-glyceraldehyde 3-phosphate = dihydroxyacetone phosphate. The protein operates within carbohydrate biosynthesis; gluconeogenesis. It functions in the pathway carbohydrate degradation; glycolysis; D-glyceraldehyde 3-phosphate from glycerone phosphate: step 1/1. Functionally, involved in the gluconeogenesis. Catalyzes stereospecifically the conversion of dihydroxyacetone phosphate (DHAP) to D-glyceraldehyde-3-phosphate (G3P). This Chloroherpeton thalassium (strain ATCC 35110 / GB-78) protein is Triosephosphate isomerase.